We begin with the raw amino-acid sequence, 141 residues long: Large ribosomal subunit protein uL11 (141 aa).

This sequence belongs to the universal ribosomal protein uL11 family. In terms of assembly, part of the ribosomal stalk of the 50S ribosomal subunit. Interacts with L10 and the large rRNA to form the base of the stalk. L10 forms an elongated spine to which L12 dimers bind in a sequential fashion forming a multimeric L10(L12)X complex. In terms of processing, one or more lysine residues are methylated.

Functionally, forms part of the ribosomal stalk which helps the ribosome interact with GTP-bound translation factors. In Chlamydia muridarum (strain MoPn / Nigg), this protein is Large ribosomal subunit protein uL11.